The following is a 194-amino-acid chain: dITP/XTP pyrophosphatase (194 aa).

8–13 (TGNPGK) is a substrate binding site. Residues E38 and D67 each contribute to the Mg(2+) site. The Proton acceptor role is filled by D67. Substrate is bound by residues S68, 146 to 149 (FGYD), K169, and 174 to 175 (HR).

The protein belongs to the HAM1 NTPase family. As to quaternary structure, homodimer. Mg(2+) serves as cofactor.

The catalysed reaction is XTP + H2O = XMP + diphosphate + H(+). It carries out the reaction dITP + H2O = dIMP + diphosphate + H(+). It catalyses the reaction ITP + H2O = IMP + diphosphate + H(+). In terms of biological role, pyrophosphatase that catalyzes the hydrolysis of nucleoside triphosphates to their monophosphate derivatives, with a high preference for the non-canonical purine nucleotides XTP (xanthosine triphosphate), dITP (deoxyinosine triphosphate) and ITP. Seems to function as a house-cleaning enzyme that removes non-canonical purine nucleotides from the nucleotide pool, thus preventing their incorporation into DNA/RNA and avoiding chromosomal lesions. The polypeptide is dITP/XTP pyrophosphatase (Synechocystis sp. (strain ATCC 27184 / PCC 6803 / Kazusa)).